We begin with the raw amino-acid sequence, 411 residues long: LL-diaminopimelate aminotransferase (411 aa).

2 residues coordinate substrate: tyrosine 16 and glycine 43. Pyridoxal 5'-phosphate contacts are provided by residues tyrosine 73, 109–110 (AK), tyrosine 133, asparagine 188, tyrosine 219, and 247–249 (SYS). Lysine 110, tyrosine 133, and asparagine 188 together coordinate substrate. Residue lysine 250 is modified to N6-(pyridoxal phosphate)lysine. Residues arginine 258 and asparagine 293 each coordinate pyridoxal 5'-phosphate. Residues asparagine 293 and arginine 389 each contribute to the substrate site.

Belongs to the class-I pyridoxal-phosphate-dependent aminotransferase family. LL-diaminopimelate aminotransferase subfamily. Homodimer. It depends on pyridoxal 5'-phosphate as a cofactor.

It carries out the reaction (2S,6S)-2,6-diaminopimelate + 2-oxoglutarate = (S)-2,3,4,5-tetrahydrodipicolinate + L-glutamate + H2O + H(+). The protein operates within amino-acid biosynthesis; L-lysine biosynthesis via DAP pathway; LL-2,6-diaminopimelate from (S)-tetrahydrodipicolinate (aminotransferase route): step 1/1. Its function is as follows. Involved in the synthesis of meso-diaminopimelate (m-DAP or DL-DAP), required for both lysine and peptidoglycan biosynthesis. Catalyzes the direct conversion of tetrahydrodipicolinate to LL-diaminopimelate. This is LL-diaminopimelate aminotransferase from Methanosphaera stadtmanae (strain ATCC 43021 / DSM 3091 / JCM 11832 / MCB-3).